Consider the following 824-residue polypeptide: Dapper 1 (824 aa).

Disordered regions lie at residues 1–34 (MKPIPATPDHLGQHQESPRRKDKGEAESERQRTR), 61–80 (ALTPGAPTHGDTATRAGDTP), 131–150 (EEHLETDSRPSSGFYELSDG), 454–487 (TSNVQKENVTPNAPTNLSNASSSACNGSPRESTQ), and 516–536 (ASSSFDERPPLDFKSEGSSSQ). An interaction with tcf7l1 region spans residues 2-343 (KPIPATPDHL…PVRTNKPRTS (342 aa)). Over residues 11–34 (LGQHQESPRRKDKGEAESERQRTR) the composition is skewed to basic and acidic residues. A coiled-coil region spans residues 19 to 47 (RRKDKGEAESERQRTRERLEATLAGLAEL). Basic and acidic residues predominate over residues 520 to 530 (FDERPPLDFKS). The short motif at 821 to 824 (MTTV) is the PDZ-binding element.

It belongs to the dapper family. As to quaternary structure, interacts with dbf4, dvl2 and tcf7l1.

The protein localises to the cytoplasm. It localises to the nucleus. Involved in regulation of intracellular signaling pathways during development. Specifically thought to play a role in canonical and/or non-canonical Wnt signaling pathways through interaction with DSH (Dishevelled) family proteins. Binds to dvl2 and regulates the degradation of ctnnb1/beta-catenin, thereby modulating the transcriptional activation of target genes of the Wnt signaling pathway. May also bind to and directly stimulate the activity of tcf7l1. This chain is Dapper 1 (dact1), found in Xenopus tropicalis (Western clawed frog).